A 558-amino-acid chain; its full sequence is Potassium-transporting ATPase potassium-binding subunit 1 (558 aa).

12 helical membrane passes run 1 to 21, 66 to 86, 127 to 147, 166 to 186, 245 to 265, 281 to 301, 327 to 347, 354 to 374, 377 to 397, 416 to 436, 482 to 502, and 531 to 551; these read MEII…SGYL, FNGF…WLFL, MIVM…VCIA, IVRF…ILLM, IWSN…MLFL, ALIL…LTMW, FGAG…TGSV, LTPL…VFGG, VGLM…SLMV, IVLV…LAFM, ISTG…QLMI, and IVFI…LGPI.

It belongs to the KdpA family. The system is composed of three essential subunits: KdpA, KdpB and KdpC.

It is found in the cell membrane. Part of the high-affinity ATP-driven potassium transport (or Kdp) system, which catalyzes the hydrolysis of ATP coupled with the electrogenic transport of potassium into the cytoplasm. This subunit binds the extracellular potassium ions and delivers the ions to the membrane domain of KdpB through an intramembrane tunnel. The protein is Potassium-transporting ATPase potassium-binding subunit 1 of Staphylococcus aureus (strain MRSA252).